A 70-amino-acid chain; its full sequence is SPbeta prophage-derived uncharacterized HTH-type transcriptional regulator YopO (70 aa).

In terms of domain architecture, HTH cro/C1-type spans 5–59; that stretch reads IKQLMVKRGITIEELSRETMIDMQTLNKIIEMPDESDVTTIKLIALVLNVSIDEL. A DNA-binding region (H-T-H motif) is located at residues 16-35; the sequence is IEELSRETMIDMQTLNKIIE.

In Bacillus subtilis (strain 168), this protein is SPbeta prophage-derived uncharacterized HTH-type transcriptional regulator YopO (yopO).